The chain runs to 99 residues: Keratinocyte differentiation-associated protein (99 aa).

The N-terminal stretch at 1 to 22 (MKIPVLPAVVLLSLLVLHSAQG) is a signal peptide.

In terms of tissue distribution, highly expressed in skin and detected at lower levels in thymus. In skin, found exclusively in lamellar granules of granular keratinocytes and in the intracellular space of the stratum corneum. Also highly expressed in oral mucosa, tongue, esophagus, and stomach, and at much lower levels in bladder and uterus. Not detected in gastrointestinal mucosa.

The protein resides in the secreted. Its function is as follows. May act as a soluble regulator of keratinocyte differentiation. May play an important role in embryonic skin morphogenesis. This is Keratinocyte differentiation-associated protein (KRTDAP) from Homo sapiens (Human).